The chain runs to 380 residues: uncharacterized protein (380 aa).

The Peptidase M14 domain occupies 111 to 369; the sequence is APYSMERHHD…DCLAILAEMI (259 aa). 3 residues coordinate Zn(2+): His-164, Glu-167, and His-257. The active-site Proton donor/acceptor is the Glu-333.

It depends on Zn(2+) as a cofactor.

This is an uncharacterized protein from Zymomonas mobilis subsp. mobilis (strain ATCC 31821 / ZM4 / CP4).